A 164-amino-acid chain; its full sequence is Lipocalin-like 1 protein (164 aa).

This sequence belongs to the calycin superfamily. Lipocalin family.

This Homo sapiens (Human) protein is Lipocalin-like 1 protein (LCNL1).